A 636-amino-acid chain; its full sequence is PTS system beta-glucoside-specific EIIBCA component (636 aa).

The 86-residue stretch at M1–A86 folds into the PTS EIIB type-1 domain. Residue C26 is the Phosphocysteine intermediate; for EIIB activity of the active site. A run of 10 helical transmembrane segments spans residues I104–I124, L146–A166, A172–L192, F215–A235, L258–I278, I299–W319, V337–L357, V369–L389, A407–I427, and I444–L464. Residues D105 to T476 form the PTS EIIC type-1 domain. Residues E472–S492 form a disordered region. Positions D506–N610 constitute a PTS EIIA type-1 domain. H558 acts as the Tele-phosphohistidine intermediate; for EIIA activity in catalysis.

Its subcellular location is the cell membrane. In terms of biological role, the phosphoenolpyruvate-dependent sugar phosphotransferase system (sugar PTS), a major carbohydrate active -transport system, catalyzes the phosphorylation of incoming sugar substrates concomitantly with their translocation across the cell membrane. This system is involved in beta-glucoside transport. The protein is PTS system beta-glucoside-specific EIIBCA component (bglP) of Halalkalibacterium halodurans (strain ATCC BAA-125 / DSM 18197 / FERM 7344 / JCM 9153 / C-125) (Bacillus halodurans).